The primary structure comprises 120 residues: Small ribosomal subunit protein bS16 (120 aa).

The tract at residues 84-120 (KRESRNNPQQGQPKKKAQERAAAAAAAAEKAASEAAA) is disordered. The span at 103-120 (RAAAAAAAAEKAASEAAA) shows a compositional bias: low complexity.

It belongs to the bacterial ribosomal protein bS16 family.

This Beijerinckia indica subsp. indica (strain ATCC 9039 / DSM 1715 / NCIMB 8712) protein is Small ribosomal subunit protein bS16.